Consider the following 90-residue polypeptide: Small ribosomal subunit protein uS15c (90 aa).

Belongs to the universal ribosomal protein uS15 family. In terms of assembly, part of the 30S ribosomal subunit.

It localises to the plastid. The protein resides in the chloroplast. This Phaseolus vulgaris (Kidney bean) protein is Small ribosomal subunit protein uS15c (rps15).